The chain runs to 121 residues: uncharacterized protein (121 aa).

In terms of domain architecture, HTH gntR-type spans 9-77; that stretch reads KPIYLQIADQ…RGQGTFIAEK (69 aa). Positions 37–56 form a DNA-binding region, H-T-H motif; that stretch reads VREMAIQTKVNPNTIQRTYS.

This is an uncharacterized protein from Bacillus subtilis (strain 168).